We begin with the raw amino-acid sequence, 186 residues long: MLILLDQDGVLADFEHAFIDAWRKRHPDIEPVAFEERKSFHIREDYAPELRGLAEAIYTAPGFIRDLPPVPGAVEAFRELLALGMDVRICSSPLMQFENCVAEKYLWVERHLGRDATQRLILTRDKTLVQGDLLIDDRPVITGAARPRWRHIIYDAPYNRDQTDRPRLDWRNWRNVLAGELYRSDA.

Catalysis depends on Asp6, which acts as the Nucleophile. Positions 6, 8, and 137 each coordinate Mg(2+). The Proton donor role is filled by Asp8.

The protein belongs to the 5'(3')-deoxyribonucleotidase family. Mg(2+) is required as a cofactor.

Dephosphorylates the 5' and 2'(3')-phosphates of deoxyribonucleotides. The chain is Putative 5'(3')-deoxyribonucleotidase from Bordetella pertussis (strain Tohama I / ATCC BAA-589 / NCTC 13251).